The sequence spans 556 residues: Zinc finger protein 18 (556 aa).

Positions 41–123 (RQLFRQFRYQ…TLVESLKGEP (83 aa)) constitute an SCAN box domain. Residues 169–195 (QDLPLQNSSSATGELLSHGVKEESDME) form a disordered region. The 74-residue stretch at 218–291 (ELGTAVLPPL…HLHGAEKMAR (74 aa)) folds into the KRAB domain. 5 C2H2-type zinc fingers span residues 415–437 (PTCR…QRTH), 443–465 (FHCH…QRTH), 471–493 (CKCD…EKIH), 499–521 (YKCP…QRVH), and 527–549 (YKCT…QRSH).

Belongs to the krueppel C2H2-type zinc-finger protein family.

The protein resides in the nucleus. Its function is as follows. May be involved in transcriptional regulation. The sequence is that of Zinc finger protein 18 (Znf18) from Mus musculus (Mouse).